Here is a 642-residue protein sequence, read N- to C-terminus: Probable Xaa-Pro aminopeptidase P (642 aa).

Mn(2+) contacts are provided by Asp439, Asp450, Glu548, and Glu562.

This sequence belongs to the peptidase M24B family. Mn(2+) is required as a cofactor.

The catalysed reaction is Release of any N-terminal amino acid, including proline, that is linked to proline, even from a dipeptide or tripeptide.. Catalyzes the removal of a penultimate prolyl residue from the N-termini of peptides. This is Probable Xaa-Pro aminopeptidase P (AMPP) from Laccaria bicolor (strain S238N-H82 / ATCC MYA-4686) (Bicoloured deceiver).